Here is a 74-residue protein sequence, read N- to C-terminus: ATP synthase subunit 9, mitochondrial (74 aa).

The next 2 membrane-spanning stretches (helical) occupy residues 16–36 (GLIGAGVGIGVVFGALILGVA) and 50–70 (ILGFAFSEATGLFALMMAFLL).

It belongs to the ATPase C chain family. F-type ATPases have 2 components, CF(1) - the catalytic core - and CF(0) - the membrane proton channel. CF(1) has five subunits: alpha(3), beta(3), gamma(1), delta(1), epsilon(1). CF(0) has three main subunits: a, b and c.

The protein localises to the mitochondrion membrane. Functionally, mitochondrial membrane ATP synthase (F(1)F(0) ATP synthase or Complex V) produces ATP from ADP in the presence of a proton gradient across the membrane which is generated by electron transport complexes of the respiratory chain. F-type ATPases consist of two structural domains, F(1) - containing the extramembraneous catalytic core and F(0) - containing the membrane proton channel, linked together by a central stalk and a peripheral stalk. During catalysis, ATP synthesis in the catalytic domain of F(1) is coupled via a rotary mechanism of the central stalk subunits to proton translocation. Part of the complex F(0) domain. A homomeric c-ring of probably 10 subunits is part of the complex rotary element. The polypeptide is ATP synthase subunit 9, mitochondrial (ATP9) (Trichophyton rubrum (Athlete's foot fungus)).